Consider the following 147-residue polypeptide: Phospholipase A2 SSD387 (147 aa).

The signal sequence occupies residues 1–19 (MSPKFLLFSIIAVWSCAAA). Positions 20–28 (IEALFIQPR) are excised as a propeptide. 5 disulfide bridges follow: cysteine 55-cysteine 71, cysteine 70-cysteine 130, cysteine 77-cysteine 123, cysteine 86-cysteine 116, and cysteine 109-cysteine 121. Ca(2+) is bound by residues glycine 56 and glycine 58. Histidine 74 is a catalytic residue. A Ca(2+)-binding site is contributed by aspartate 75. Aspartate 124 is an active-site residue.

Ca(2+) is required as a cofactor. In terms of tissue distribution, expressed by the venom gland.

It localises to the secreted. It catalyses the reaction a 1,2-diacyl-sn-glycero-3-phosphocholine + H2O = a 1-acyl-sn-glycero-3-phosphocholine + a fatty acid + H(+). Its function is as follows. PLA2 catalyzes the calcium-dependent hydrolysis of the 2-acyl groups in 3-sn-phosphoglycerides. The chain is Phospholipase A2 SSD387 from Scolopendra dehaani (Thai centipede).